The following is a 95-amino-acid chain: Cell division protein FtsB (95 aa).

Residues 1 to 3 are Cytoplasmic-facing; sequence MRL. Residues 4–21 form a helical membrane-spanning segment; sequence FILILSAILLLFQYDLWF. The Periplasmic portion of the chain corresponds to 22 to 95; that stretch reads GKNGYLDYKE…RIAKENKDNR (74 aa). The stretch at 28 to 62 forms a coiled coil; that stretch reads DYKETAEEIAMHKAENTKLSQRNQVVAAEIRDLKD.

This sequence belongs to the FtsB family. In terms of assembly, part of a complex composed of FtsB, FtsL and FtsQ.

It is found in the cell inner membrane. Its function is as follows. Essential cell division protein. May link together the upstream cell division proteins, which are predominantly cytoplasmic, with the downstream cell division proteins, which are predominantly periplasmic. This Mannheimia succiniciproducens (strain KCTC 0769BP / MBEL55E) protein is Cell division protein FtsB.